Here is a 121-residue protein sequence, read N- to C-terminus: Large ribosomal subunit protein eL8 (121 aa).

This sequence belongs to the eukaryotic ribosomal protein eL8 family. Part of the 50S ribosomal subunit. Probably part of the RNase P complex.

It is found in the cytoplasm. In terms of biological role, multifunctional RNA-binding protein that recognizes the K-turn motif in ribosomal RNA, the RNA component of RNase P, box H/ACA, box C/D and box C'/D' sRNAs. The polypeptide is Large ribosomal subunit protein eL8 (Thermoplasma volcanium (strain ATCC 51530 / DSM 4299 / JCM 9571 / NBRC 15438 / GSS1)).